The chain runs to 260 residues: Thiazole synthase (260 aa).

Residue Lys102 is the Schiff-base intermediate with DXP of the active site. 1-deoxy-D-xylulose 5-phosphate is bound by residues Gly163, 189-190 (AG), and 211-212 (NT).

Belongs to the ThiG family. Homotetramer. Forms heterodimers with either ThiH or ThiS.

It is found in the cytoplasm. The enzyme catalyses [ThiS sulfur-carrier protein]-C-terminal-Gly-aminoethanethioate + 2-iminoacetate + 1-deoxy-D-xylulose 5-phosphate = [ThiS sulfur-carrier protein]-C-terminal Gly-Gly + 2-[(2R,5Z)-2-carboxy-4-methylthiazol-5(2H)-ylidene]ethyl phosphate + 2 H2O + H(+). It functions in the pathway cofactor biosynthesis; thiamine diphosphate biosynthesis. Functionally, catalyzes the rearrangement of 1-deoxy-D-xylulose 5-phosphate (DXP) to produce the thiazole phosphate moiety of thiamine. Sulfur is provided by the thiocarboxylate moiety of the carrier protein ThiS. In vitro, sulfur can be provided by H(2)S. The protein is Thiazole synthase of Geobacter sp. (strain M21).